Here is a 631-residue protein sequence, read N- to C-terminus: 1-deoxy-D-xylulose-5-phosphate synthase (631 aa).

Residues 1-21 (MPTTFHEIPRERPLTPLLDSA) are disordered. Thiamine diphosphate is bound by residues His87 and 128–130 (GHS). Asp159 contributes to the Mg(2+) binding site. Thiamine diphosphate-binding positions include 160 to 161 (GA), Asn188, Phe295, and Glu377. Asn188 provides a ligand contact to Mg(2+).

The protein belongs to the transketolase family. DXPS subfamily. Homodimer. Mg(2+) is required as a cofactor. Thiamine diphosphate serves as cofactor.

The enzyme catalyses D-glyceraldehyde 3-phosphate + pyruvate + H(+) = 1-deoxy-D-xylulose 5-phosphate + CO2. Its pathway is metabolic intermediate biosynthesis; 1-deoxy-D-xylulose 5-phosphate biosynthesis; 1-deoxy-D-xylulose 5-phosphate from D-glyceraldehyde 3-phosphate and pyruvate: step 1/1. In terms of biological role, catalyzes the acyloin condensation reaction between C atoms 2 and 3 of pyruvate and glyceraldehyde 3-phosphate to yield 1-deoxy-D-xylulose-5-phosphate (DXP). This is 1-deoxy-D-xylulose-5-phosphate synthase from Ectopseudomonas mendocina (strain ymp) (Pseudomonas mendocina).